We begin with the raw amino-acid sequence, 428 residues long: D-amino acid dehydrogenase (428 aa).

Val3 to Tyr17 is a binding site for FAD.

Belongs to the DadA oxidoreductase family. It depends on FAD as a cofactor.

The enzyme catalyses a D-alpha-amino acid + A + H2O = a 2-oxocarboxylate + AH2 + NH4(+). Its pathway is amino-acid degradation; D-alanine degradation; NH(3) and pyruvate from D-alanine: step 1/1. Its function is as follows. Oxidative deamination of D-amino acids. The polypeptide is D-amino acid dehydrogenase (Burkholderia thailandensis (strain ATCC 700388 / DSM 13276 / CCUG 48851 / CIP 106301 / E264)).